A 342-amino-acid polypeptide reads, in one-letter code: Cell division protein ZipA (342 aa).

Residues 1–6 (MEDLQL) lie on the Periplasmic side of the membrane. Residues 7–27 (VLFILGAIAIVAVLVHGFWSI) traverse the membrane as a helical segment. At 28–342 (RRQQPKSLKD…DYLHRIRANA (315 aa)) the chain is on the cytoplasmic side. The interval 33 to 57 (KSLKDSPMGNFYKQQADKESPPKRV) is disordered. The segment covering 47 to 57 (QADKESPPKRV) has biased composition (basic and acidic residues).

Belongs to the ZipA family. In terms of assembly, interacts with FtsZ via their C-terminal domains.

The protein localises to the cell inner membrane. In terms of biological role, essential cell division protein that stabilizes the FtsZ protofilaments by cross-linking them and that serves as a cytoplasmic membrane anchor for the Z ring. Also required for the recruitment to the septal ring of downstream cell division proteins. This chain is Cell division protein ZipA, found in Shewanella sp. (strain W3-18-1).